We begin with the raw amino-acid sequence, 282 residues long: MSSYANHQVLAGLTLGKSTDYRDTYDASLLQGVPRSLNRDPLGLKADNLPFHGTDIWTLYELSWLNAKGLPQVAVGHVELDYTSANLIESKSFKLYLNSFNQTRFNNWDEVRQTLERDLSTCAQGKVSVALYRLDELEGQPIGHFNGTCIDDQDITIDNYEFTTDYLENATSGEKVVEETLVSHLLKSNCLITHQPDWGSIQIQYRGRQIDREKLLRYLVSFRHHNEFHEQCVERIFNDLLRFCQPEKLSVYARYTRRGGLDINPWRSNSDFVPSTTRLVRQ.

88 to 90 provides a ligand contact to substrate; it reads IES. 90 to 91 serves as a coordination point for NADPH; the sequence is SK. Cys-190 acts as the Thioimide intermediate in catalysis. Residue Asp-197 is the Proton donor of the active site. Substrate is bound at residue 229–230; sequence HE. 258–259 is an NADPH binding site; that stretch reads RG.

Belongs to the GTP cyclohydrolase I family. QueF type 2 subfamily. Homodimer.

It is found in the cytoplasm. The catalysed reaction is 7-aminomethyl-7-carbaguanine + 2 NADP(+) = 7-cyano-7-deazaguanine + 2 NADPH + 3 H(+). The protein operates within tRNA modification; tRNA-queuosine biosynthesis. Its function is as follows. Catalyzes the NADPH-dependent reduction of 7-cyano-7-deazaguanine (preQ0) to 7-aminomethyl-7-deazaguanine (preQ1). This chain is NADPH-dependent 7-cyano-7-deazaguanine reductase, found in Escherichia coli O17:K52:H18 (strain UMN026 / ExPEC).